The sequence spans 311 residues: Probable manganese-dependent inorganic pyrophosphatase (311 aa).

The Mn(2+) site is built by His9, Asp13, Asp15, Asp77, His99, and Asp151.

The protein belongs to the PPase class C family. It depends on Mn(2+) as a cofactor.

It is found in the cytoplasm. It carries out the reaction diphosphate + H2O = 2 phosphate + H(+). This Streptococcus pyogenes serotype M1 protein is Probable manganese-dependent inorganic pyrophosphatase.